We begin with the raw amino-acid sequence, 322 residues long: Daunorubicin resistance ATP-binding protein DrrA2 (322 aa).

Residues 6 to 236 form the ABC transporter domain; the sequence is VRAEAMEKRY…VGGDRIEVVV (231 aa). Residue 38–45 coordinates ATP; sequence GPNGAGKT.

Belongs to the ABC transporter superfamily. Drug exporter-1 (DrugE1) (TC 3.A.1.105) family. The complex is probably composed of two ATP-binding proteins (DrrA2) and two transmembrane proteins (DrrB2).

It is found in the cell membrane. The enzyme catalyses daunorubicin(in) + ATP + H2O = daunorubicin(out) + ADP + phosphate + H(+). Functionally, part of the ABC transporter complex DrrA2B2 involved in daunorubicin efflux. Responsible for energy coupling to the transport system. Confers self-resistance to daunorubicin, an antibiotic produced by S.coeruleorubidus. The polypeptide is Daunorubicin resistance ATP-binding protein DrrA2 (Streptomyces coeruleorubidus).